Consider the following 318-residue polypeptide: MKPNVVSADALFEEFRGPLKWEWVAGLGASERRFDEVVVRLASSGADLVGYLNYIHPYRVQILGEREIAYLGSASPDDCKRRIARIVTLEPPVLVLADNQTAPDALVSMCERAQIPMFSTQESAAFVIDVLRAYLSKHFADRTTMHGVFMDILGLGVMITGESGLGKSELGLELISRGNGLVADDSVDLFRINQTTIEGKCPELLQNLLEVRGIGLLDIRAIFGETAVRRKMRLKLIVHLVRKETLERDYERLPYEPLTQDVLGVPVLKVVIQVVAGRNIAVLVEAAVRNTILQLRGIDTYQEFVERHRRAMEHDNGR.

Residues H146 and K167 contribute to the active site. ATP is bound at residue 161–168; sequence GESGLGKS. Mg(2+) is bound at residue S168. D185 (proton acceptor; for phosphorylation activity. Proton donor; for dephosphorylation activity) is an active-site residue. The segment at 209–218 is important for the catalytic mechanism of both phosphorylation and dephosphorylation; it reads LEVRGIGLLD. E210 is a Mg(2+) binding site. The active site involves R252. Positions 273–278 are important for the catalytic mechanism of dephosphorylation; sequence QVVAGR.

This sequence belongs to the HPrK/P family. As to quaternary structure, homohexamer. Mg(2+) serves as cofactor.

It catalyses the reaction [HPr protein]-L-serine + ATP = [HPr protein]-O-phospho-L-serine + ADP + H(+). The catalysed reaction is [HPr protein]-O-phospho-L-serine + phosphate + H(+) = [HPr protein]-L-serine + diphosphate. Its function is as follows. Catalyzes the ATP- as well as the pyrophosphate-dependent phosphorylation of a specific serine residue in HPr, a phosphocarrier protein of the phosphoenolpyruvate-dependent sugar phosphotransferase system (PTS). HprK/P also catalyzes the pyrophosphate-producing, inorganic phosphate-dependent dephosphorylation (phosphorolysis) of seryl-phosphorylated HPr (P-Ser-HPr). This chain is HPr kinase/phosphorylase, found in Verminephrobacter eiseniae (strain EF01-2).